A 310-amino-acid chain; its full sequence is MAKVRTKDVMEQFNLELISGEEGINRPITMSDLSRPGIEIAGYFTYYPRERVQLLGKTELSFFEQLPEEEKKQRMDSLCTDVTPAIILSRDMPIPQELIDASEKNGVPVLRSPLKTTRLSSRLTNFLESRLAPTTAIHGVLVDIYGVGVLITGKSGVGKSETALELVKRGHRLVADDCVEIRQEDQDTLVGNAPELIEHLLEIRGLGIINVMTLFGAGAVRSNKRITIVMNLELWEQGKQYDRLGLEEETMKIIDTEITKLTIPVRPGRNLAVIIEVAAMNFRLKRMGLNAAEQFTNKLADVIEDGEQEE.

Mg(2+) is bound at residue His-138. 153-160 (GKSGVGKS) serves as a coordination point for ATP. Lys-159 is a catalytic residue. A Mg(2+)-binding site is contributed by Ser-160. Asp-177 (proton acceptor; for phosphorylation activity. Proton donor; for dephosphorylation activity) is an active-site residue. The interval 201–210 (LEIRGLGIIN) is important for the catalytic mechanism of both phosphorylation and dephosphorylation. Glu-202 contacts Mg(2+). Arg-243 is an active-site residue. The important for the catalytic mechanism of dephosphorylation stretch occupies residues 264–269 (PVRPGR).

This sequence belongs to the HPrK/P family. As to quaternary structure, homohexamer. It depends on Mg(2+) as a cofactor. Ca(2+) serves as cofactor.

The enzyme catalyses [HPr protein]-L-serine + ATP = [HPr protein]-O-phospho-L-serine + ADP + H(+). It carries out the reaction [HPr protein]-O-phospho-L-serine + phosphate + H(+) = [HPr protein]-L-serine + diphosphate. Is active as a kinase only at high ATP concentrations or at low ATP concentrations in the presence of the allosteric activator fructose 1,6-bisphosphate (FBP). The pyrophosphate-dependent HPr phosphorylation is not stimulated by FBP. Kinase activity is inhibited by inorganic phosphate (Pi). Dephosphorylation of HPr(Ser-P) by B.subtilis HPrK/P becomes prevalent when the concentration of Pi increases. Thus, the kinase activity may prevail under conditions of good nutrient supply, whereas the phosphorylase activity is dominant if carbon and energy sources become limiting. Functionally, catalyzes the ATP- as well as the pyrophosphate-dependent phosphorylation of 'Ser-45' in HPr, a phosphocarrier protein of the phosphoenolpyruvate-dependent sugar phosphotransferase system (PTS). HprK/P also catalyzes the pyrophosphate-producing, inorganic phosphate-dependent dephosphorylation (phosphorolysis) of seryl-phosphorylated HPr (P-Ser-HPr). The two antagonistic activities of HprK/P are regulated by several intracellular metabolites, which change their concentration in response to the absence or presence of rapidly metabolisable carbon sources (glucose, fructose, etc.) in the growth medium. Also phosphorylates/dephosphorylates the HPr-like catabolite repression protein crh on 'Ser-46'. Therefore, by controlling the phosphorylation state of HPr and crh, HPrK/P is a sensor enzyme that plays a major role in the regulation of carbon metabolism and sugar transport: it mediates carbon catabolite repression (CCR), and regulates PTS-catalyzed carbohydrate uptake and inducer exclusion. In Bacillus subtilis (strain 168), this protein is HPr kinase/phosphorylase (hprK).